The following is a 297-amino-acid chain: Guanylate kinase (297 aa).

The 180-residue stretch at 5–184 (GKVIIISGPS…AVSKITDILI (180 aa)) folds into the Guanylate kinase-like domain. 12 to 19 (GPSGVGKG) serves as a coordination point for ATP. Positions 205–297 (ENIVDQKYTY…IKQRSDFSGD (93 aa)) are unknown.

It belongs to the guanylate kinase family.

It localises to the cytoplasm. The enzyme catalyses GMP + ATP = GDP + ADP. In terms of biological role, essential for recycling GMP and indirectly, cGMP. This Mesoplasma florum (strain ATCC 33453 / NBRC 100688 / NCTC 11704 / L1) (Acholeplasma florum) protein is Guanylate kinase (gmk).